Consider the following 342-residue polypeptide: tRNA dimethylallyltransferase (342 aa).

An ATP-binding site is contributed by glycine 39–threonine 46. Threonine 41–threonine 46 serves as a coordination point for substrate. Residues aspartate 64–glutamine 67 form an interaction with substrate tRNA region.

The protein belongs to the IPP transferase family. As to quaternary structure, monomer. Mg(2+) is required as a cofactor.

It catalyses the reaction adenosine(37) in tRNA + dimethylallyl diphosphate = N(6)-dimethylallyladenosine(37) in tRNA + diphosphate. Functionally, catalyzes the transfer of a dimethylallyl group onto the adenine at position 37 in tRNAs that read codons beginning with uridine, leading to the formation of N6-(dimethylallyl)adenosine (i(6)A). In Chlamydia felis (strain Fe/C-56) (Chlamydophila felis), this protein is tRNA dimethylallyltransferase.